A 352-amino-acid chain; its full sequence is S-adenosylmethionine:tRNA ribosyltransferase-isomerase (352 aa).

It belongs to the QueA family. As to quaternary structure, monomer.

Its subcellular location is the cytoplasm. The catalysed reaction is 7-aminomethyl-7-carbaguanosine(34) in tRNA + S-adenosyl-L-methionine = epoxyqueuosine(34) in tRNA + adenine + L-methionine + 2 H(+). Its pathway is tRNA modification; tRNA-queuosine biosynthesis. In terms of biological role, transfers and isomerizes the ribose moiety from AdoMet to the 7-aminomethyl group of 7-deazaguanine (preQ1-tRNA) to give epoxyqueuosine (oQ-tRNA). The sequence is that of S-adenosylmethionine:tRNA ribosyltransferase-isomerase from Bacteroides fragilis (strain ATCC 25285 / DSM 2151 / CCUG 4856 / JCM 11019 / LMG 10263 / NCTC 9343 / Onslow / VPI 2553 / EN-2).